The chain runs to 534 residues: uncharacterized protein (534 aa).

4 disordered regions span residues 1-93 (MSSS…DDTG), 123-260 (SPES…LSSA), 313-349 (AAATGRLPRPSPRRKRVQEKKSLGGVSKPALGRTFPS), and 383-505 (PWGA…QGCP). Over residues 35–45 (GPGPDPGPEPG) the composition is skewed to pro residues. A phosphoserine mark is found at Ser87 and Ser123. Over residues 145–161 (RGAAAQRCGEAARAEAG) the composition is skewed to low complexity. Residues 230-239 (SPKDPRDTPR) are compositionally biased toward basic and acidic residues.

This is an uncharacterized protein from Bos taurus (Bovine).